Here is a 218-residue protein sequence, read N- to C-terminus: N-(5'-phosphoribosyl)anthranilate isomerase (218 aa).

It belongs to the TrpF family.

The enzyme catalyses N-(5-phospho-beta-D-ribosyl)anthranilate = 1-(2-carboxyphenylamino)-1-deoxy-D-ribulose 5-phosphate. It functions in the pathway amino-acid biosynthesis; L-tryptophan biosynthesis; L-tryptophan from chorismate: step 3/5. This is N-(5'-phosphoribosyl)anthranilate isomerase from Bordetella bronchiseptica (strain ATCC BAA-588 / NCTC 13252 / RB50) (Alcaligenes bronchisepticus).